The chain runs to 392 residues: Probable tRNA sulfurtransferase (392 aa).

The THUMP domain maps to 59–166 (SCYREALKRV…DEGLFIYTTE (108 aa)). ATP contacts are provided by residues 186-187 (LL), 211-212 (YF), Arg-269, Gly-290, and Gln-299.

The protein belongs to the ThiI family.

It localises to the cytoplasm. The catalysed reaction is [ThiI sulfur-carrier protein]-S-sulfanyl-L-cysteine + a uridine in tRNA + 2 reduced [2Fe-2S]-[ferredoxin] + ATP + H(+) = [ThiI sulfur-carrier protein]-L-cysteine + a 4-thiouridine in tRNA + 2 oxidized [2Fe-2S]-[ferredoxin] + AMP + diphosphate. It catalyses the reaction [ThiS sulfur-carrier protein]-C-terminal Gly-Gly-AMP + S-sulfanyl-L-cysteinyl-[cysteine desulfurase] + AH2 = [ThiS sulfur-carrier protein]-C-terminal-Gly-aminoethanethioate + L-cysteinyl-[cysteine desulfurase] + A + AMP + 2 H(+). Its pathway is cofactor biosynthesis; thiamine diphosphate biosynthesis. Catalyzes the ATP-dependent transfer of a sulfur to tRNA to produce 4-thiouridine in position 8 of tRNAs, which functions as a near-UV photosensor. Also catalyzes the transfer of sulfur to the sulfur carrier protein ThiS, forming ThiS-thiocarboxylate. This is a step in the synthesis of thiazole, in the thiamine biosynthesis pathway. The sulfur is donated as persulfide by IscS. The chain is Probable tRNA sulfurtransferase from Coxiella burnetii (strain RSA 493 / Nine Mile phase I).